Consider the following 146-residue polypeptide: Ribosome maturation factor RimP (146 aa).

This sequence belongs to the RimP family.

Its subcellular location is the cytoplasm. Functionally, required for maturation of 30S ribosomal subunits. In Dechloromonas aromatica (strain RCB), this protein is Ribosome maturation factor RimP.